Here is a 436-residue protein sequence, read N- to C-terminus: Proteasome-activating nucleotidase (436 aa).

A coiled-coil region spans residues 7–98; sequence KDVRDLCEKF…LRSDLQRMKK (92 aa). ATP contacts are provided by residues 223–228 and histidine 362; that span reads GTGKTL. The segment at 434-436 is docks into pockets in the proteasome alpha-ring to cause gate opening; the sequence is AYH.

Belongs to the AAA ATPase family. As to quaternary structure, homohexamer. The hexameric complex has a two-ring architecture resembling a top hat that caps the 20S proteasome core at one or both ends. Upon ATP-binding, the C-terminus of PAN interacts with the alpha-rings of the proteasome core by binding to the intersubunit pockets.

The protein resides in the cytoplasm. ATPase which is responsible for recognizing, binding, unfolding and translocation of substrate proteins into the archaeal 20S proteasome core particle. Is essential for opening the gate of the 20S proteasome via an interaction with its C-terminus, thereby allowing substrate entry and access to the site of proteolysis. Thus, the C-termini of the proteasomal ATPase function like a 'key in a lock' to induce gate opening and therefore regulate proteolysis. Unfolding activity requires energy from ATP hydrolysis, whereas ATP binding alone promotes ATPase-20S proteasome association which triggers gate opening, and supports translocation of unfolded substrates. In Methanopyrus kandleri (strain AV19 / DSM 6324 / JCM 9639 / NBRC 100938), this protein is Proteasome-activating nucleotidase.